Consider the following 780-residue polypeptide: LPS-assembly protein LptD (780 aa).

An N-terminal signal peptide occupies residues methionine 1–alanine 24.

This sequence belongs to the LptD family. Component of the lipopolysaccharide transport and assembly complex. Interacts with LptE and LptA.

It is found in the cell outer membrane. Its function is as follows. Together with LptE, is involved in the assembly of lipopolysaccharide (LPS) at the surface of the outer membrane. This chain is LPS-assembly protein LptD, found in Sodalis glossinidius (strain morsitans).